Here is a 557-residue protein sequence, read N- to C-terminus: Trigger factor (557 aa).

The PPIase FKBP-type domain maps to 169-255 (GDVVVIDFQA…LKEIKTKELP (87 aa)). The segment at 438–557 (WVDSEGNPTE…KAGKKSKKDK (120 aa)) is disordered. Residues 455–466 (SEGEDRQERSES) show a composition bias toward basic and acidic residues.

It belongs to the FKBP-type PPIase family. Tig subfamily.

Its subcellular location is the cytoplasm. The catalysed reaction is [protein]-peptidylproline (omega=180) = [protein]-peptidylproline (omega=0). Functionally, involved in protein export. Acts as a chaperone by maintaining the newly synthesized protein in an open conformation. Functions as a peptidyl-prolyl cis-trans isomerase. The chain is Trigger factor from Synechococcus sp. (strain JA-3-3Ab) (Cyanobacteria bacterium Yellowstone A-Prime).